A 179-amino-acid chain; its full sequence is Photosystem I assembly protein Ycf4 (179 aa).

Transmembrane regions (helical) follow at residues 21-41 (LISF…YLGV) and 59-79 (IVMT…LLNI).

It belongs to the Ycf4 family.

It localises to the plastid. The protein localises to the chloroplast thylakoid membrane. In terms of biological role, seems to be required for the assembly of the photosystem I complex. The polypeptide is Photosystem I assembly protein Ycf4 (Rhodomonas salina (Cryptomonas salina)).